The following is a 282-amino-acid chain: Elongation factor Ts (282 aa).

Residues 81–84 (TDFV) are involved in Mg(2+) ion dislocation from EF-Tu. The segment covering 218 to 270 (KPAQPAQVAEVAAAPPAEPVADQPAAEPPAESVAPEPVVAESADAEPAPAAEG) has biased composition (low complexity). The interval 218–282 (KPAQPAQVAE…SKKGSTKKKK (65 aa)) is disordered. A compositionally biased stretch (basic residues) spans 273–282 (SKKGSTKKKK).

It belongs to the EF-Ts family.

It localises to the cytoplasm. In terms of biological role, associates with the EF-Tu.GDP complex and induces the exchange of GDP to GTP. It remains bound to the aminoacyl-tRNA.EF-Tu.GTP complex up to the GTP hydrolysis stage on the ribosome. This chain is Elongation factor Ts, found in Synechococcus sp. (strain JA-3-3Ab) (Cyanobacteria bacterium Yellowstone A-Prime).